We begin with the raw amino-acid sequence, 547 residues long: NXPE family member 1 (547 aa).

The N-terminal stretch at Met-1–Thr-21 is a signal peptide. N-linked (GlcNAc...) asparagine glycosylation is found at Asn-39 and Asn-211.

Belongs to the NXPE family.

It is found in the secreted. The polypeptide is NXPE family member 1 (NXPE1) (Homo sapiens (Human)).